A 360-amino-acid chain; its full sequence is MPSPCESGKTTNCSGAPSSSCAKSVECCKKQLSVGVLQQVSASSSGAIVTSLFMTPLDVVKIRLQQQTRPFPKGECFYYHNGLMEHVCVSCEVRKPCEWYQRPGNFRGTADAIVKIARHEGIRSLWSGLSPTMVMALPATVFYFTTYDNLSVWLKKKMCCRRAFSPEKWTPPDWSAAAVAGIVARTIAVTVVSPIEMIRTKMQSKRLTYHEIGHLVRSSMATKGISSFYLGWTPTMLRDIPFSGIYWAGYDLFKTNLQRRQGPDHNPFVVSFVSGAAAGVVASIFTHPFDVIKTNCQIRIGGSIDDMNKSITTVIKDMYHSRGISAFSSGLVPRLVKVSPSCAIMISFYEYFKFLFQKNH.

Solcar repeat units lie at residues 34–153, 172–256, and 266–355; these read VGVL…LSVW, PDWS…FKTN, and NPFV…FKFL. 6 helical membrane passes run 40–60, 125–145, 178–198, 225–247, 269–289, and 327–348; these read VSASSSGAIVTSLFMTPLDVV, LWSGLSPTMVMALPATVFYFT, AVAGIVARTIAVTVVSPIEMI, ISSFYLGWTPTMLRDIPFSGIYW, VVSFVSGAAAGVVASIFTHPF, and FSSGLVPRLVKVSPSCAIMISF.

It belongs to the mitochondrial carrier (TC 2.A.29) family.

It localises to the mitochondrion inner membrane. This is an uncharacterized protein from Caenorhabditis elegans.